We begin with the raw amino-acid sequence, 430 residues long: Tol-Pal system protein TolB (430 aa).

The first 19 residues, 1–19 (MKKQIFFTLILLISGLARA), serve as a signal peptide directing secretion.

Belongs to the TolB family. In terms of assembly, the Tol-Pal system is composed of five core proteins: the inner membrane proteins TolA, TolQ and TolR, the periplasmic protein TolB and the outer membrane protein Pal. They form a network linking the inner and outer membranes and the peptidoglycan layer.

It is found in the periplasm. Part of the Tol-Pal system, which plays a role in outer membrane invagination during cell division and is important for maintaining outer membrane integrity. This chain is Tol-Pal system protein TolB, found in Hahella chejuensis (strain KCTC 2396).